A 360-amino-acid polypeptide reads, in one-letter code: Photosystem II protein D1 2 (360 aa).

Helical transmembrane passes span 29 to 46 (YIGWFGVLMIPTLLAATT), 118 to 133 (HFLTGVFCYLGREWEL), and 142 to 156 (WICLAFSAPVAAATA). Position 118 (histidine 118) interacts with chlorophyll a. Tyrosine 126 serves as a coordination point for pheophytin a. [CaMn4O5] cluster-binding residues include aspartate 170 and glutamate 189. The chain crosses the membrane as a helical span at residues 197–218 (FHMLGVAGVFGGSLFSAMHGSL). Histidine 198 is a binding site for chlorophyll a. Residues histidine 215 and 264–265 (SF) contribute to the a quinone site. Residue histidine 215 participates in Fe cation binding. Histidine 272 is a Fe cation binding site. Residues 274–288 (FLAAWPVIGIWFTAL) traverse the membrane as a helical segment. Histidine 332, glutamate 333, aspartate 342, and alanine 344 together coordinate [CaMn4O5] cluster. Positions 345 to 360 (AGEVAPVALTAPAING) are excised as a propeptide.

The protein belongs to the reaction center PufL/M/PsbA/D family. In terms of assembly, PSII is composed of 1 copy each of membrane proteins PsbA, PsbB, PsbC, PsbD, PsbE, PsbF, PsbH, PsbI, PsbJ, PsbK, PsbL, PsbM, PsbT, PsbX, PsbY, PsbZ, Psb30/Ycf12, peripheral proteins PsbO, CyanoQ (PsbQ), PsbU, PsbV and a large number of cofactors. It forms dimeric complexes. The D1/D2 heterodimer binds P680, chlorophylls that are the primary electron donor of PSII, and subsequent electron acceptors. It shares a non-heme iron and each subunit binds pheophytin, quinone, additional chlorophylls, carotenoids and lipids. D1 provides most of the ligands for the Mn4-Ca-O5 cluster of the oxygen-evolving complex (OEC). There is also a Cl(-1) ion associated with D1 and D2, which is required for oxygen evolution. The PSII complex binds additional chlorophylls, carotenoids and specific lipids. serves as cofactor. Post-translationally, tyr-161 forms a radical intermediate that is referred to as redox-active TyrZ, YZ or Y-Z. In terms of processing, C-terminally processed by CtpA; processing is essential to allow assembly of the oxygen-evolving complex and thus photosynthetic growth.

The protein resides in the cellular thylakoid membrane. It catalyses the reaction 2 a plastoquinone + 4 hnu + 2 H2O = 2 a plastoquinol + O2. Functionally, photosystem II (PSII) is a light-driven water:plastoquinone oxidoreductase that uses light energy to abstract electrons from H(2)O, generating O(2) and a proton gradient subsequently used for ATP formation. It consists of a core antenna complex that captures photons, and an electron transfer chain that converts photonic excitation into a charge separation. The D1/D2 (PsbA/PsbD) reaction center heterodimer binds P680, the primary electron donor of PSII as well as several subsequent electron acceptors. This Trichormus variabilis (strain ATCC 29413 / PCC 7937) (Anabaena variabilis) protein is Photosystem II protein D1 2.